Here is a 251-residue protein sequence, read N- to C-terminus: Ubiquinone/menaquinone biosynthesis C-methyltransferase UbiE (251 aa).

Residues T74, D95, 123–124, and S140 contribute to the S-adenosyl-L-methionine site; that span reads NA.

Belongs to the class I-like SAM-binding methyltransferase superfamily. MenG/UbiE family.

It carries out the reaction a 2-demethylmenaquinol + S-adenosyl-L-methionine = a menaquinol + S-adenosyl-L-homocysteine + H(+). The catalysed reaction is a 2-methoxy-6-(all-trans-polyprenyl)benzene-1,4-diol + S-adenosyl-L-methionine = a 5-methoxy-2-methyl-3-(all-trans-polyprenyl)benzene-1,4-diol + S-adenosyl-L-homocysteine + H(+). It participates in quinol/quinone metabolism; menaquinone biosynthesis; menaquinol from 1,4-dihydroxy-2-naphthoate: step 2/2. It functions in the pathway cofactor biosynthesis; ubiquinone biosynthesis. In terms of biological role, methyltransferase required for the conversion of demethylmenaquinol (DMKH2) to menaquinol (MKH2) and the conversion of 2-polyprenyl-6-methoxy-1,4-benzoquinol (DDMQH2) to 2-polyprenyl-3-methyl-6-methoxy-1,4-benzoquinol (DMQH2). The sequence is that of Ubiquinone/menaquinone biosynthesis C-methyltransferase UbiE from Cronobacter sakazakii (strain ATCC BAA-894) (Enterobacter sakazakii).